Here is a 682-residue protein sequence, read N- to C-terminus: Glutamine--fructose-6-phosphate aminotransferase [isomerizing] 2 (682 aa).

C2 (for GATase activity) is an active-site residue. Residues 2–288 enclose the Glutamine amidotransferase type-2 domain; sequence CGIFAYMNYR…DDDIAAVADG (287 aa). S244 carries the phosphoserine modification. 2 consecutive SIS domains span residues 360–499 and 531–672; these read HLKE…DRIS and LALE…VDFP. Substrate contacts are provided by residues 377 to 378, 422 to 424, T427, and H578; these read TS and SQS.

It carries out the reaction D-fructose 6-phosphate + L-glutamine = D-glucosamine 6-phosphate + L-glutamate. The protein operates within nucleotide-sugar biosynthesis; UDP-N-acetyl-alpha-D-glucosamine biosynthesis; alpha-D-glucosamine 6-phosphate from D-fructose 6-phosphate: step 1/1. Functionally, controls the flux of glucose into the hexosamine pathway. Most likely involved in regulating the availability of precursors for N- and O-linked glycosylation of proteins. The polypeptide is Glutamine--fructose-6-phosphate aminotransferase [isomerizing] 2 (GFPT2) (Bos taurus (Bovine)).